Reading from the N-terminus, the 1488-residue chain is Phenolphthiocerol/phthiocerol polyketide synthase subunit E (1488 aa).

The 434-residue stretch at 5 to 438 folds into the Ketosynthase family 3 (KS3) domain; that stretch reads ENAIAVVGMA…GTNAHVVLEE (434 aa). Catalysis depends on for beta-ketoacyl synthase activity residues C184, H320, and H361. Residues 551–868 are acyltransferase; the sequence is VFLFPGQGAQ…GELWSAGVEV (318 aa). S641 acts as the For malonyltransferase activity in catalysis. A Carrier domain is found at 930 to 1004; sequence NGESQTEVTL…SLTAAVDASF (75 aa). S965 bears the O-(pantetheine 4'-phosphoryl)serine mark. NADP(+) is bound at residue 1286–1331; it reads EGVVAVELEGEGRSVLRPDVDLRRTVGWFTTYYPVPLACATGLGAL.

It depends on NADP(+) as a cofactor. Pantetheine 4'-phosphate is required as a cofactor.

The catalysed reaction is icosanoyl-[(phenol)carboxyphthiodiolenone synthase] + 2 (S)-methylmalonyl-CoA + 3 malonyl-CoA + 5 NADPH + 10 H(+) = C32-carboxyphthiodiolenone-[(phenol)carboxyphthiodiolenone synthase] + 5 CO2 + 5 NADP(+) + 5 CoA + 2 H2O. It catalyses the reaction docosanoyl-[(phenol)carboxyphthiodiolenone synthase] + 2 (S)-methylmalonyl-CoA + 3 malonyl-CoA + 5 NADPH + 10 H(+) = C34-carboxyphthiodiolenone-[(phenol)carboxyphthiodiolenone synthase] + 5 CO2 + 5 NADP(+) + 5 CoA + 2 H2O. It carries out the reaction 17-(4-hydroxyphenyl)heptadecanoyl-[(phenol)carboxyphthiodiolenone synthase] + 2 (S)-methylmalonyl-CoA + 3 malonyl-CoA + 5 NADPH + 10 H(+) = C35-(phenol)carboxyphthiodiolenone-[(phenol)carboxyphthiodiolenone synthase] + 5 CO2 + 5 NADP(+) + 5 CoA + 2 H2O. The enzyme catalyses 19-(4-hydroxyphenyl)nonadecanoyl-[(phenol)carboxyphthiodiolenone synthase] + 2 (S)-methylmalonyl-CoA + 3 malonyl-CoA + 5 NADPH + 10 H(+) = C37-(phenol)carboxyphthiodiolenone-[(phenol)carboxyphthiodiolenone synthase] + 5 CO2 + 5 NADP(+) + 5 CoA + 2 H2O. The protein operates within lipid metabolism; fatty acid biosynthesis. Part of the PpsABCDE complex involved in the biosynthesis of the lipid core common to phthiocerols and phenolphthiocerols by successive additions of malonyl-CoA or methylmalonyl-CoA extender units. PpsA can accept as substrate the activated forms of either icosanoyl (C20), docosanoyl (C22) or lignoceroyl (C24) groups from FadD26, or a (4-hydroxyphenyl)-C17 or (4-hydroxyphenyl)-C19 fatty acyl from FadD29. PpsA initiates the biosynthesis and extends its substrate using a malonyl-CoA extender unit. The PpsB and PpsC proteins add the second and third malonyl-CoA extender units. PpsD adds an (R)-methylmalonyl unit and PpsE adds a second (R)-methylmalonyl unit. The incorporation of the methylmalonyl units results in formation of two branched methyl groups in the elongated product. The sequence is that of Phenolphthiocerol/phthiocerol polyketide synthase subunit E (ppsE) from Mycobacterium bovis (strain ATCC BAA-935 / AF2122/97).